The sequence spans 302 residues: Merozoite surface protein 2 (302 aa).

Positions 1-20 (MKVIKTLSIINFFIFVTFNI) are cleaved as a signal peptide. N22 and N36 each carry an N-linked (GlcNAc...) asparagine glycan. The tract at residues 44–228 (EESKPPTGAV…EQTESPELQS (185 aa)) is polymorphic region. The 1; partial repeat unit spans residues 55–60 (GSGAGA). Residues 55–113 (GSGAGAGSGAGAVAGSGAGAVAGSGAGAVAGSGAGAVAGSGAGAVAGSGAGAVAGSGAG) form an 8 X 8 AA tandem repeats of G-S-G-A-G-A-V-A region. 6 tandem repeats follow at residues 61-68 (GSGAGAVA), 69-76 (GSGAGAVA), 77-84 (GSGAGAVA), 85-92 (GSGAGAVA), 93-100 (GSGAGAVA), and 101-108 (GSGAGAVA). The 8; partial repeat unit spans residues 109 to 113 (GSGAG). Positions 114–263 (NGANPGADAE…DSQKECTDGN (150 aa)) are disordered. A compositionally biased stretch (low complexity) spans 125–150 (SPSTPATTTTTTTTNDAEASTSTSSE). Basic and acidic residues predominate over residues 151–167 (NRNHNNAETNPKGKGEV). 2 stretches are compositionally biased toward polar residues: residues 169–195 (KPNQ…NVPR) and 202–230 (KSPT…QSAP). N179 carries N-linked (GlcNAc...) asparagine glycosylation. A glycan (N-linked (GlcNAc...) asparagine) is linked at N251. Residues C259 and C267 are joined by a disulfide bond. N275 and N276 each carry an N-linked (GlcNAc...) asparagine glycan. N276 carries GPI-anchor amidated asparagine lipidation. Positions 277–302 (SSNIASINKFVVLISATLVLSFAIFI) are cleaved as a propeptide — removed in mature form.

It localises to the cell membrane. Functionally, may play a role in the merozoite attachment to the erythrocyte. In Plasmodium falciparum (isolate tak 9), this protein is Merozoite surface protein 2.